Here is a 122-residue protein sequence, read N- to C-terminus: Small ribosomal subunit protein uS13 (122 aa).

The segment at 97–122 is disordered; it reads PVRGQRTKTNARTRKGPARTVAGKKK.

Belongs to the universal ribosomal protein uS13 family. In terms of assembly, part of the 30S ribosomal subunit. Forms a loose heterodimer with protein S19. Forms two bridges to the 50S subunit in the 70S ribosome.

Its function is as follows. Located at the top of the head of the 30S subunit, it contacts several helices of the 16S rRNA. In the 70S ribosome it contacts the 23S rRNA (bridge B1a) and protein L5 of the 50S subunit (bridge B1b), connecting the 2 subunits; these bridges are implicated in subunit movement. Contacts the tRNAs in the A and P-sites. This Pelobacter propionicus (strain DSM 2379 / NBRC 103807 / OttBd1) protein is Small ribosomal subunit protein uS13.